The following is a 450-amino-acid chain: Phosphoglucosamine mutase (450 aa).

Ser102 acts as the Phosphoserine intermediate in catalysis. Mg(2+) is bound by residues Ser102, Asp243, Asp245, and Asp247. A Phosphoserine modification is found at Ser102.

It belongs to the phosphohexose mutase family. It depends on Mg(2+) as a cofactor. Post-translationally, activated by phosphorylation.

It catalyses the reaction alpha-D-glucosamine 1-phosphate = D-glucosamine 6-phosphate. Functionally, catalyzes the conversion of glucosamine-6-phosphate to glucosamine-1-phosphate. This chain is Phosphoglucosamine mutase, found in Mesorhizobium japonicum (strain LMG 29417 / CECT 9101 / MAFF 303099) (Mesorhizobium loti (strain MAFF 303099)).